A 714-amino-acid polypeptide reads, in one-letter code: Choline transporter-like protein 5 (714 aa).

Residues 1 to 33 lie on the Cytoplasmic side of the membrane; the sequence is MGRRSAAPTSPFGEPRKFDPKFKGPIGKRHCTD. A helical transmembrane segment spans residues 34 to 54; it reads VLCCIIFVVVILGYIALGVVA. Residues 55 to 237 lie on the Extracellular side of the membrane; it reads WIHGDPRKII…KIFEDYASSW (183 aa). Asn83, Asn132, Asn192, and Asn205 each carry an N-linked (GlcNAc...) asparagine glycan. Residues 238-258 form a helical membrane-spanning segment; the sequence is YWILIALFIAMVVSLLFLILL. At 259 to 261 the chain is on the cytoplasmic side; sequence RFT. Residues 262–282 traverse the membrane as a helical segment; the sequence is AGVFFWIFIIGVIGVVGYGIW. Over 283–320 the chain is Extracellular; it reads HCFWEYDSLKGVPGADLTIYDIGLQTDFRVYLQLRQTW. A helical membrane pass occupies residues 321–341; that stretch reads LAFMILLCIVEVIIILMLIFL. Topologically, residues 342-346 are cytoplasmic; sequence RNRIR. The helical transmembrane segment at 347–367 threads the bilayer; it reads IAIALLQEGSRAIGYIMSTLF. Residues 368 to 369 lie on the Extracellular side of the membrane; sequence YP. The chain crosses the membrane as a helical span at residues 370–390; sequence IITFILIAICISYWAVTAVFM. Residues 391–455 lie on the Cytoplasmic side of the membrane; sequence ATSGEPIYKV…QYILIFQLCN (65 aa). A helical membrane pass occupies residues 456 to 476; sequence VFVFLWLVNFSIALGQCTLAG. Topologically, residues 477 to 510 are extracellular; it reads AFASYYWAFKKPADIPACPLFSSFGRAIRYHTGS. A helical membrane pass occupies residues 511–531; that stretch reads LALGSLILALVQFIRIILEYL. Residues 532-605 are Cytoplasmic-facing; that stretch reads DHKLKASQNS…RVAVLDKVTD (74 aa). Residues 606–626 traverse the membrane as a helical segment; the sequence is FLLFLGKVFVTGSVGVLAFFF. Residues 627–644 lie on the Extracellular side of the membrane; that stretch reads FTRKIPVLTDEAPALNYY. A helical membrane pass occupies residues 645-665; that stretch reads WVPLLTVLIGSYLIAHGFFSV. Residues 666 to 711 lie on the Cytoplasmic side of the membrane; the sequence is YAMCVDTLFLCFCEDLERNNGSSSKPYYMSPNLHRILGKKEILSKK.

It belongs to the CTL (choline transporter-like) family.

The protein localises to the cell membrane. The enzyme catalyses choline(out) + n H(+)(in) = choline(in) + n H(+)(out). In terms of biological role, choline/H+ antiporter. This chain is Choline transporter-like protein 5 (slc44a5), found in Xenopus tropicalis (Western clawed frog).